The sequence spans 447 residues: Probable glycine dehydrogenase (decarboxylating) subunit 1 (447 aa).

This sequence belongs to the GcvP family. N-terminal subunit subfamily. The glycine cleavage system is composed of four proteins: P, T, L and H. In this organism, the P 'protein' is a heterodimer of two subunits.

It catalyses the reaction N(6)-[(R)-lipoyl]-L-lysyl-[glycine-cleavage complex H protein] + glycine + H(+) = N(6)-[(R)-S(8)-aminomethyldihydrolipoyl]-L-lysyl-[glycine-cleavage complex H protein] + CO2. Functionally, the glycine cleavage system catalyzes the degradation of glycine. The P protein binds the alpha-amino group of glycine through its pyridoxal phosphate cofactor; CO(2) is released and the remaining methylamine moiety is then transferred to the lipoamide cofactor of the H protein. This is Probable glycine dehydrogenase (decarboxylating) subunit 1 from Maricaulis maris (strain MCS10) (Caulobacter maris).